We begin with the raw amino-acid sequence, 243 residues long: Uridylate kinase (243 aa).

Position 18-21 (18-21 (KLGG)) interacts with ATP. Gly-59 lines the UMP pocket. Gly-60 and Arg-64 together coordinate ATP. UMP-binding positions include Asp-79 and 140-147 (MGMPYFST). ATP contacts are provided by Tyr-173 and Asp-176.

It belongs to the UMP kinase family. In terms of assembly, homohexamer.

The protein localises to the cytoplasm. It carries out the reaction UMP + ATP = UDP + ADP. It functions in the pathway pyrimidine metabolism; CTP biosynthesis via de novo pathway; UDP from UMP (UMPK route): step 1/1. Inhibited by UTP. Its function is as follows. Catalyzes the reversible phosphorylation of UMP to UDP. The polypeptide is Uridylate kinase (Corynebacterium efficiens (strain DSM 44549 / YS-314 / AJ 12310 / JCM 11189 / NBRC 100395)).